The following is a 283-amino-acid chain: Ribosomal RNA small subunit methyltransferase A (283 aa).

Positions 22, 24, 49, 70, and 113 each coordinate S-adenosyl-L-methionine.

This sequence belongs to the class I-like SAM-binding methyltransferase superfamily. rRNA adenine N(6)-methyltransferase family. RsmA subfamily.

Its subcellular location is the cytoplasm. It catalyses the reaction adenosine(1518)/adenosine(1519) in 16S rRNA + 4 S-adenosyl-L-methionine = N(6)-dimethyladenosine(1518)/N(6)-dimethyladenosine(1519) in 16S rRNA + 4 S-adenosyl-L-homocysteine + 4 H(+). In terms of biological role, specifically dimethylates two adjacent adenosines (A1518 and A1519) in the loop of a conserved hairpin near the 3'-end of 16S rRNA in the 30S particle. May play a critical role in biogenesis of 30S subunits. This is Ribosomal RNA small subunit methyltransferase A from Myxococcus xanthus (strain DK1622).